Consider the following 31-residue polypeptide: Fibrinogen beta chain (31 aa).

Acidic residues predominate over residues 1 to 10 (HYYDDTDEEE). Positions 1–31 (HYYDDTDEEERIVSTVDARGHRPLDKKREEA) are disordered. Residue Tyr-2 is modified to Sulfotyrosine; partial. Tyr-3 carries the sulfotyrosine modification. The segment covering 18-31 (ARGHRPLDKKREEA) has biased composition (basic and acidic residues).

In terms of assembly, heterohexamer; disulfide linked. Contains 2 sets of 3 non-identical chains (alpha, beta and gamma). The 2 heterotrimers are in head to head conformation with the N-termini in a small central domain. Conversion of fibrinogen to fibrin is triggered by thrombin, which cleaves fibrinopeptides A and B from alpha and beta chains, and thus exposes the N-terminal polymerization sites responsible for the formation of the soft clot.

It is found in the secreted. Its function is as follows. Cleaved by the protease thrombin to yield monomers which, together with fibrinogen alpha (FGA) and fibrinogen gamma (FGG), polymerize to form an insoluble fibrin matrix. Fibrin has a major function in hemostasis as one of the primary components of blood clots. In addition, functions during the early stages of wound repair to stabilize the lesion and guide cell migration during re-epithelialization. Was originally thought to be essential for platelet aggregation, based on in vitro studies using anticoagulated blood. However subsequent studies have shown that it is not absolutely required for thrombus formation in vivo. Enhances expression of SELP in activated platelets. Maternal fibrinogen is essential for successful pregnancy. Fibrin deposition is also associated with infection, where it protects against IFNG-mediated hemorrhage. May also facilitate the antibacterial immune response via both innate and T-cell mediated pathways. This is Fibrinogen beta chain (FGB) from Canis lupus familiaris (Dog).